The following is a 426-amino-acid chain: Glutamate-1-semialdehyde 2,1-aminomutase (426 aa).

Residue Lys265 is modified to N6-(pyridoxal phosphate)lysine.

The protein belongs to the class-III pyridoxal-phosphate-dependent aminotransferase family. HemL subfamily. As to quaternary structure, homodimer. It depends on pyridoxal 5'-phosphate as a cofactor.

It is found in the cytoplasm. It catalyses the reaction (S)-4-amino-5-oxopentanoate = 5-aminolevulinate. It functions in the pathway porphyrin-containing compound metabolism; protoporphyrin-IX biosynthesis; 5-aminolevulinate from L-glutamyl-tRNA(Glu): step 2/2. This is Glutamate-1-semialdehyde 2,1-aminomutase from Salmonella gallinarum (strain 287/91 / NCTC 13346).